The primary structure comprises 230 residues: Ion-translocating oxidoreductase complex subunit E (230 aa).

The next 6 helical transmembrane spans lie at 18–38 (ALVQ…ATNA), 39–59 (LGLG…VSAL), 63–83 (TPAE…VSAV), 86–106 (LINA…PLIV), 125–145 (WLSA…MFVL), and 182–202 (PFLL…MLAV).

Belongs to the NqrDE/RnfAE family. In terms of assembly, the complex is composed of six subunits: RsxA, RsxB, RsxC, RsxD, RsxE and RsxG.

It localises to the cell inner membrane. Its function is as follows. Part of a membrane-bound complex that couples electron transfer with translocation of ions across the membrane. Required to maintain the reduced state of SoxR. This chain is Ion-translocating oxidoreductase complex subunit E, found in Salmonella newport (strain SL254).